The sequence spans 493 residues: 6-phosphogluconate dehydrogenase, decarboxylating (493 aa).

NADP(+) is bound by residues 12–17, 35–37, 77–79, and Asn-105; these read GLAVMG, NRT, and VKA. Residues Asn-105 and 131-133 contribute to the substrate site; that span reads SGG. Lys-187 (proton acceptor) is an active-site residue. Residue 190-191 coordinates substrate; sequence HN. Glu-194 serves as the catalytic Proton donor. Residues Tyr-195, Lys-266, Arg-293, Arg-456, and His-462 each coordinate substrate.

It belongs to the 6-phosphogluconate dehydrogenase family. In terms of assembly, homodimer.

It catalyses the reaction 6-phospho-D-gluconate + NADP(+) = D-ribulose 5-phosphate + CO2 + NADPH. It participates in carbohydrate degradation; pentose phosphate pathway; D-ribulose 5-phosphate from D-glucose 6-phosphate (oxidative stage): step 3/3. Functionally, catalyzes the oxidative decarboxylation of 6-phosphogluconate to ribulose 5-phosphate and CO(2), with concomitant reduction of NADP to NADPH. In Dictyostelium discoideum (Social amoeba), this protein is 6-phosphogluconate dehydrogenase, decarboxylating (gnd).